Here is a 335-residue protein sequence, read N- to C-terminus: MSKRKAPQETLNGGITDMLTELANFEKNVSQAIHKYNAYRKAASVIAKYPHKIKSGAEAKKLPGVGTKIAEKIDEFLATGKLRKLEKIRQDDTSSSINFLTRVSGIGPSAARKFVDEGIKTLEDLRKNEDKLNHHQRIGLKYFGDFEKRIPREEMLQMQDIVLNEVKKVDSEYIATVCGSFRRGAESSGDMDVLLTHPSFTSESTKQPKLLHQVVEQLQKVHFITDTLSKGETKFMGVCQLPSKNDEKEYPHRRIDIRLIPKDQYYCGVLYFTGSDIFNKNMRAHALEKGFTINEYTIRPLGVTGVAGEPLPVDSEKDIFDYIQWKYREPKDRSE.

Residue lysine 41 forms a Glycyl lysine isopeptide (Lys-Gly) (interchain with G-Cter in ubiquitin) linkage. Position 60 (lysine 60) interacts with K(+). A Na(+)-binding site is contributed by lysine 60. A Glycyl lysine isopeptide (Lys-Gly) (interchain with G-Cter in ubiquitin) cross-link involves residue lysine 61. 2 residues coordinate K(+): leucine 62 and valine 65. 2 residues coordinate Na(+): leucine 62 and valine 65. Lysine 72 (nucleophile; Schiff-base intermediate with DNA; for 5'-dRP lyase activity) is an active-site residue. Lysine 72 is subject to N6-acetyllysine. Lysine 81 participates in a covalent cross-link: Glycyl lysine isopeptide (Lys-Gly) (interchain with G-Cter in ubiquitin). The residue at position 83 (arginine 83) is an Omega-N-methylarginine; by PRMT6. Positions 101, 103, and 106 each coordinate K(+). 3 residues coordinate Na(+): threonine 101, valine 103, and isoleucine 106. Position 149 (arginine 149) interacts with dATP. Arginine 149 is a dCTP binding site. Arginine 149 contacts dGTP. Arginine 149 lines the dTTP pocket. Arginine 152 is subject to Omega-N-methylarginine; by PRMT6. 4 residues coordinate dATP: serine 180, arginine 183, glycine 189, and aspartate 190. 4 residues coordinate dCTP: serine 180, arginine 183, glycine 189, and aspartate 190. The dGTP site is built by serine 180, arginine 183, glycine 189, aspartate 190, and aspartate 192. Residues serine 180, arginine 183, glycine 189, and aspartate 190 each contribute to the dTTP site. The interval 183–192 is DNA-binding; the sequence is RGAESSGDMD. Mg(2+) contacts are provided by aspartate 190, aspartate 192, and aspartate 256.

This sequence belongs to the DNA polymerase type-X family. In terms of assembly, monomer. Binds single-stranded DNA (ssDNA). Interacts with APEX1, LIG1, LIG3, FEN1, PCNA and XRCC1. Interacts with HUWE1/ARF-BP1, STUB1/CHIP and USP47. Interacts with FAM168A. Requires Mg(2+) as cofactor. Methylation by PRMT6 stimulates the polymerase activity by enhancing DNA binding and processivity. Post-translationally, ubiquitinated at Lys-41, Lys-61 and Lys-81: monoubiquitinated by HUWE1/ARF-BP1. Monoubiquitinated protein is then the target of STUB1/CHIP, which catalyzes polyubiquitination from monoubiquitin, leading to degradation by the proteasome. USP47 mediates the deubiquitination of monoubiquitinated protein, preventing polyubiquitination by STUB1/CHIP and its subsequent degradation.

It localises to the nucleus. It is found in the cytoplasm. It catalyses the reaction DNA(n) + a 2'-deoxyribonucleoside 5'-triphosphate = DNA(n+1) + diphosphate. The enzyme catalyses a 5'-end 2'-deoxyribose-2'-deoxyribonucleotide-DNA = (2E,4S)-4-hydroxypenten-2-al-5-phosphate + a 5'-end 5'-phospho-2'-deoxyribonucleoside-DNA + H(+). The catalysed reaction is 2'-deoxyribonucleotide-(2'-deoxyribose 5'-phosphate)-2'-deoxyribonucleotide-DNA = a 3'-end 2'-deoxyribonucleotide-(2,3-dehydro-2,3-deoxyribose 5'-phosphate)-DNA + a 5'-end 5'-phospho-2'-deoxyribonucleoside-DNA + H(+). In terms of biological role, repair polymerase that plays a key role in base-excision repair. During this process, the damaged base is excised by specific DNA glycosylases, the DNA backbone is nicked at the abasic site by an apurinic/apyrimidic (AP) endonuclease, and POLB removes 5'-deoxyribose-phosphate from the preincised AP site acting as a 5'-deoxyribose-phosphate lyase (5'-dRP lyase); through its DNA polymerase activity, it adds one nucleotide to the 3' end of the arising single-nucleotide gap. Conducts 'gap-filling' DNA synthesis in a stepwise distributive fashion rather than in a processive fashion as for other DNA polymerases. It is also able to cleave sugar-phosphate bonds 3' to an intact AP site, acting as an AP lyase. This chain is DNA polymerase beta (POLB), found in Homo sapiens (Human).